The primary structure comprises 230 residues: Cytidylate kinase (230 aa).

ATP is bound at residue 12 to 20 (GPSGAGKGT).

This sequence belongs to the cytidylate kinase family. Type 1 subfamily.

Its subcellular location is the cytoplasm. The enzyme catalyses CMP + ATP = CDP + ADP. It carries out the reaction dCMP + ATP = dCDP + ADP. The protein is Cytidylate kinase of Aeromonas salmonicida (strain A449).